We begin with the raw amino-acid sequence, 198 residues long: MARCKS-related protein (198 aa).

Positions 1–198 (MGSQSSKAPR…DPAPASEQNE (198 aa)) are disordered. Glycine 2 is lipidated: N-myristoyl glycine. A Phosphothreonine modification is found at threonine 14. Phosphoserine occurs at positions 22, 36, 41, and 48. The span at 53-62 (GTEEAAGATG) shows a compositional bias: low complexity. Position 71 is a phosphoserine (serine 71). Over residues 76–85 (AKGEVPPKET) the composition is skewed to basic and acidic residues. Threonine 85 is subject to Phosphothreonine. The span at 86–98 (PKKKKKFSFKKPF) shows a compositional bias: basic residues. The tract at residues 87–110 (KKKKKFSFKKPFKLSGLSFKRNRK) is effector domain involved in lipid-binding and calmodulin-binding. Phosphoserine; by PKC occurs at positions 93, 101, and 104. Serine 119 bears the Phosphoserine mark. Serine 120 bears the Phosphoserine; by MAPK8 mark. At serine 132 the chain carries Phosphoserine. A Phosphothreonine; by MAPK8 modification is found at threonine 148. A phosphoserine mark is found at serine 151 and serine 162. Residues 156-167 (AKGAEASAAAKG) show a composition bias toward low complexity. At threonine 170 the chain carries Phosphothreonine. Residue threonine 182 is modified to Phosphothreonine; by MAPK8.

This sequence belongs to the MARCKS family. Binds to filamentous actin (F-actin), but not to monomeric G-actin, independently of its phosphorylation status. Interacts with calmodulin. Post-translationally, phosphorylated. Phosphorylation at Ser-120 and Thr-182 is non-redundantly catalyzed by MAPK8 in vivo. Phosphorylation at Thr-148 is preferentially catalyzed by MAPK8 in vivo, but this modification can also be catalyzed by other kinases in the absence of MAPK8. May be phosphorylated by protein kinase C, which disrupts the interaction with calmodulin.

Its subcellular location is the cytoplasm. The protein resides in the cytoskeleton. It localises to the cell membrane. Controls cell movement by regulating actin cytoskeleton homeostasis and filopodium and lamellipodium formation. When unphosphorylated, induces cell migration. When phosphorylated by MAPK8, induces actin bundles formation and stabilization, thereby reducing actin plasticity, hence restricting cell movement, including neuronal migration. May be involved in coupling the protein kinase C and calmodulin signal transduction systems. The sequence is that of MARCKS-related protein (MARCKSL1) from Bos taurus (Bovine).